We begin with the raw amino-acid sequence, 132 residues long: Large ribosomal subunit protein uL14 (132 aa).

It belongs to the universal ribosomal protein uL14 family. Part of the 50S ribosomal subunit. Forms a cluster with proteins L3 and L24e, part of which may contact the 16S rRNA in 2 intersubunit bridges.

In terms of biological role, binds to 23S rRNA. Forms part of two intersubunit bridges in the 70S ribosome. The polypeptide is Large ribosomal subunit protein uL14 (Methanococcus aeolicus (strain ATCC BAA-1280 / DSM 17508 / OCM 812 / Nankai-3)).